The chain runs to 539 residues: MAKEIKFSEEARRAMLRGVDKLADAVKVTLGPKGRNVVLEKKFGSPLITNDGVTIAKEIELEDPFENMGAKLVAEVASKTNDVAGDGTTTATVLAQAMIREGLKNVTAGANPMGIRKGIEKAVAVAVEELKAISKPIKGKESIAQVAAISAADEEVGQLIAEAMERVGNDGVITLEESKGFTTELDVVEGMQFDRGYVSPYMITDTEKMEAVLENPYILITDKKISNIQDILPILEQVVQQGKPLLIIAEDVEGEALATLVVNKLRGTFTAVAVKAPGFGDRRKAMLEDIAILTGGEVISEELGRDLKSTTIASLGRASKVVVTKENTTIVDGAGDSERIKARINQIRAQLEETTSEFDREKLQERLAKLAGGVAVIKVGAATETELKERKLRIEDALNSTRAAVEEGIVAGGGTALMNVYNKVAAIEAEGDEATGVKIVLRAIEEPVRQIAQNAGLEGSVIVERLKTEKPGIGFNAATGEWVDMIEAGIVDPTKVTRSALQNAASVAAMFLTTEAVVADKPEENKGGNPGMPDMGGMM.

ATP contacts are provided by residues 29-32 (TLGP), 86-90 (DGTTT), Gly-413, 476-478 (NAA), and Asp-492.

This sequence belongs to the chaperonin (HSP60) family. In terms of assembly, forms a cylinder of 14 subunits composed of two heptameric rings stacked back-to-back. Interacts with the co-chaperonin GroES.

The protein localises to the cytoplasm. The enzyme catalyses ATP + H2O + a folded polypeptide = ADP + phosphate + an unfolded polypeptide.. Its function is as follows. Together with its co-chaperonin GroES, plays an essential role in assisting protein folding. The GroEL-GroES system forms a nano-cage that allows encapsulation of the non-native substrate proteins and provides a physical environment optimized to promote and accelerate protein folding. This chain is Chaperonin GroEL, found in Geobacillus sp. (strain WCH70).